A 331-amino-acid polypeptide reads, in one-letter code: Septin homolog spn2 (331 aa).

One can recognise a Septin-type G domain in the interval 29–301 (RGFQFNVMVV…EKFRFKQLSS (273 aa)). The interval 39-46 (GPSGSGKS) is G1 motif. Residues 39–46 (GPSGSGKS), T73, G99, 179–187 (KSDSLTLEE), G235, and R250 contribute to the GTP site. The interval 96-99 (DTPG) is G3 motif. Residues 178–181 (AKSD) form a G4 motif region. The interval 311 to 331 (RMGSPAPVYPSEPHLHTATAQ) is disordered.

The protein belongs to the TRAFAC class TrmE-Era-EngA-EngB-Septin-like GTPase superfamily. Septin GTPase family. As to quaternary structure, component of the septin complex composed of two copies of each spn1, spn2, spn3 and spn4. Component of the sporulation-specific septin complex composed of at least spn2, spn5, spn6 and spn7.

It localises to the cytoplasm. The protein resides in the cell cortex. It is found in the forespore membrane. In terms of biological role, plays a role in the cell cycle. Involved in a late stage of septum formation leading to the separation of the daughter cells. Involved in the correct orientation of forespore membrane extension during sporulation. Binds phosphatidylinositol 4-phosphate. The protein is Septin homolog spn2 (spn2) of Schizosaccharomyces pombe (strain 972 / ATCC 24843) (Fission yeast).